The chain runs to 320 residues: MARTVDTTGRVVQLLGLLQSRRVWTGEELAERLGVTGRSVRRDIERLRELGYPVHASKGQGGGYQLGAGMALPPLLLDPDEAVAMAVCLRLAAGGSVAGVGESALRALSKLDQVMPARLRSQVAAIHDATVTLGPNATDTAVAPDVLMTLARACRDREHVSTGYTDLRGNQTQRRLEPYQLVTTGRRWYLMAYDRDREDWRSLRLDRMSDVRATGTTFTARPAPDAAAYVGRAISASAYPYVARVRYFAPEKVVAQRFPPGTATFEPDGPDACIVTSGAEYPEQLAMYFATVGHDFEVLEPAEVIDAVGAMADRLRRAVR.

The region spanning 7–65 (TTGRVVQLLGLLQSRRVWTGEELAERLGVTGRSVRRDIERLRELGYPVHASKGQGGGYQ) is the HTH deoR-type domain. The H-T-H motif DNA-binding region spans 24-43 (WTGEELAERLGVTGRSVRRD). The 80-residue stretch at 139–218 (DTAVAPDVLM…SDVRATGTTF (80 aa)) folds into the WYL domain. The WCX domain stretch occupies residues 245–320 (VRYFAPEKVV…MADRLRRAVR (76 aa)).

As to quaternary structure, homodimer.

Transcriptional activator. Acts as a transcriptional activator of the MSMEG_1357-56 operon upon genotoxic stress. Controls adjacent genes that belong to the DinB/YfiT-like putative metalloenzymes superfamily by upregulating their expression in response to various genotoxic stress conditions, including exposure to H(2)O(2) or the natural antibiotic zeocin, as well as mitomycin C (MMC), diamide and UVC radiation. Upon genotoxic stress, upregulates two genes encoding proteins of the DinB/YfiT-like putative metalloenzymes superfamily, MSMEG_1357 and MSMEG_1356. Binds different forms of single-stranded DNA (ssDNA) with high affinity, primarily through its characteristic WYL domain. Binds nucleic acids with single-stranded regions, such as polyT 20mer ssDNA, 5' tailed, 3' tailed and fork DNA, but not ssRNA. The chain is Stress-involved WYL domain-containing regulator from Mycolicibacterium smegmatis (strain ATCC 700084 / mc(2)155) (Mycobacterium smegmatis).